Consider the following 127-residue polypeptide: Protein ApaG (127 aa).

The 126-residue stretch at 2 to 127 (SELVEHIQVH…FRLAGPNQVH (126 aa)) folds into the ApaG domain.

This is Protein ApaG from Chromohalobacter salexigens (strain ATCC BAA-138 / DSM 3043 / CIP 106854 / NCIMB 13768 / 1H11).